Here is a 218-residue protein sequence, read N- to C-terminus: Glutathione S-transferase class-mu 26 kDa isozyme (218 aa).

Positions 2-83 constitute a GST N-terminal domain; it reads SPILGYWKIK…YIADKHNMLG (82 aa). Glutathione-binding positions include 7–8, 41–45, 54–55, and 67–68; these read YW, WRNKK, NL, and QS. The region spanning 85-203 is the GST C-terminal domain; it reads CPKERAEISM…KSSKYIAWPL (119 aa). Tyr111 is a substrate binding site.

It belongs to the GST superfamily. Mu family. As to quaternary structure, homodimer.

It carries out the reaction RX + glutathione = an S-substituted glutathione + a halide anion + H(+). Conjugation of reduced glutathione to a wide number of exogenous and endogenous hydrophobic electrophiles. Functionally, GST isoenzymes appear to play a central role in the parasite detoxification system. Other functions are also suspected including a role in increasing the solubility of haematin in the parasite gut. This chain is Glutathione S-transferase class-mu 26 kDa isozyme, found in Schistosoma japonicum (Blood fluke).